Reading from the N-terminus, the 280-residue chain is Tryptophan synthase alpha chain (280 aa).

Active-site proton acceptor residues include Glu50 and Asp61.

Belongs to the TrpA family. In terms of assembly, tetramer of two alpha and two beta chains.

The catalysed reaction is (1S,2R)-1-C-(indol-3-yl)glycerol 3-phosphate + L-serine = D-glyceraldehyde 3-phosphate + L-tryptophan + H2O. The protein operates within amino-acid biosynthesis; L-tryptophan biosynthesis; L-tryptophan from chorismate: step 5/5. Functionally, the alpha subunit is responsible for the aldol cleavage of indoleglycerol phosphate to indole and glyceraldehyde 3-phosphate. The sequence is that of Tryptophan synthase alpha chain from Methylorubrum extorquens (strain PA1) (Methylobacterium extorquens).